The following is a 1070-amino-acid chain: DNA-directed RNA polymerase subunit beta (1070 aa).

Belongs to the RNA polymerase beta chain family. In plastids the minimal PEP RNA polymerase catalytic core is composed of four subunits: alpha, beta, beta', and beta''. When a (nuclear-encoded) sigma factor is associated with the core the holoenzyme is formed, which can initiate transcription.

Its subcellular location is the plastid. The protein resides in the chloroplast. It carries out the reaction RNA(n) + a ribonucleoside 5'-triphosphate = RNA(n+1) + diphosphate. Its function is as follows. DNA-dependent RNA polymerase catalyzes the transcription of DNA into RNA using the four ribonucleoside triphosphates as substrates. The sequence is that of DNA-directed RNA polymerase subunit beta from Daucus carota (Wild carrot).